Reading from the N-terminus, the 2346-residue chain is MDLSGPQTLNNILQPDELKLVPEDVQKKLSEYINNFSDEYCKNRAAANRLAEAEQKKEELENKMEDYLVKFTSFELNVNELRTHLDQMSSERVNLMDTIAKGEQTISQLRKEKASVVEERDSMMKVIERQQAELERLKQDLHTYQQQLSSAIAAKCEAIARVDEIQSKEVALELKENRMESERDMLHKEILLISGDLNKSNAELQNIRREHTINTMQLQSCLKEKTESLKLMQEQYEQAVKTIGELTSKIEMQNDTAFKQNQATEEYVGKLKKELDAKEKLFEIFKSTESDHLIQREELLQGISEIKRLLEEAEEQCAQLTEQMETMKQKHSAELDEQNKKIQAMEQELASANDLLKQARESNLESAICQLAPSAAVASRLIRSDLSLTELYSMYAKSSEELEMRNCEIEQLKLQLKSIIAEISESAPILEKQNSDYQKMKETNSELLREHDELLQNKLCLERELERALSTLNHNQNENKKLKQTHTDLSRQVCMLLDELNCIRAGVKHVRIQPTRQLPTSESLISDNLVTFSSIEELVDRNTYLLNMSRELTELLEASEKNQDKMLLEQSKNHIRKLDARFAELEDLLTQKNNTVTTLLSKCDRYKKLYFAAQKKLGQNTVDLDDSNLEPNDSALDTSEQPAANFEESRKLEKRVRQLEQQLEGEVKKYASLKENYDYYTSEKRKNDALAQEQFDSMRKEVRELTSSNCKLMNTTEFQKEQIELLHKNIGTYKQQVTTLEERTKNYEKTIIKHEQTVHLLKDEMMAAHRKHAAADAEAQSLRQENRILRDTSSRLQIEKETYHREQQSQSLLLNSLEFIKTNLERSEMEGRQRLEQRLDDTVRELAAQRRHFQEEEEKFRESINEFKRQAETAIKLKDEEKQLADKWQAELTSVREELAEKVNKVNELSKKLQEVLTPTLNDNPITAANKRAREFELKLDQATVEIESLTKELAKTREHGEQFYKMSQSAESEIKRLHELHGELVAKQEEEIKKLRSSEAELKTRISDLEAEAMLSNVTEQSKTVNQSGQLKSAQDDLKSLLEKLTEANCTIRTLRSENTSLVESLNAAEVKYANGMIQHSADIQELTRYKAEFFKANDELNQLKSGRESLQAAYDELLRSNAEAQKLLDKEREESEKRVADLHALNSNLHDQIEALASKLAVLASQSQNPNSSLNESAMDGDQSLNASGLTAAEEGRNNEQLLKIIKFLRKEKDLFAAKLDILKAENARLISEHAIQQKKVDELNGYLNQERAKSQTDVVSANKHEEVLRKIETLNAITDSNRILREERNALTLRVAELTDRISSVEKELFPLQCSNKELTSKIEEINVENTSLRTEAIKWRQRANALVEKSNRNPEEFKRLQAEREHLAKLLTAEKELNKKQSDELTVLKQRMNTEIPMLNKQMQILDEARKKQVDEFTNLKQNNTRQTQDIMELKNRLLQKEEELLKANEELETKDKTIADKETKELQLRKLAKRYKDFYIGLQSQGGGTESAAELEKVRSELEEVNNQLRALKDEHEKITKECDEVKKRTEPETDTSAIRQEYKAKLDKLVVDLTVARTDLVNQETTFAGTKSSYDETIARLEKELQENIAANKDINQRLTRENESLHMRINQLTRQLGSQQSTKPSTSSVAEKGNISESSPRTANVKPMSGSATVQQSATVTPWRGGETPLASIRPISVQNSRTAAILPTSQQPPAGSSTSTSSSSSSSSTSTTSAAGGGSSAVAQTALVPPQQQVHTTGSAALESMASSSPTSSHTDYMPSTSSASVAVAAIPPMGASSAAESSQEAESIQHPQQNDSQLFVGGAQQQVVALVSPRVEGSSSSSSSTSVPTATAPSIQDGGSQSQQPSTSGSSSSSSTVVSSHSRHTPSSSNVTTTQAGCSSQGIKRPRDIEGDSSTGTEEGVAEKMSKITKRLRGPMHSGELSAGHIGDSGMDVDQMPTSSQRDQEDDIQVVDSDDEEDVLADADDGPIDGGEAEQEGYEDSYEQDNEMDDNEGGDDDNDIAVDAQDNNEVDIEVPEQHMQAQEESQSLDNQAIATASASTQENNQSQAITSGSGESSNPVTLPQAEASNWKQAAASTSTAAARRNESSVEIVSSPQVSNFCEQPARLESAEVDGTAEVAGGAPHESAGPSDTGAASASSPQKQSEAGESSGSDALKAADDGGDHADGTDNAREADEAFAEETMATGQGEDSQPLGNDNPNVGTSQSEVSHNQANLGEGNPTEDSEGADGVSSEGEKQAVGVEEEGREAEATSPSENTRFRTLRSAVPTRRGHRAMRGGSPNSQNRPQRIVWQRDTSPGNIQQNQMSANNNRFAQRTRNRRPIRRPPPNNFNNGGRFP.

Coiled coils occupy residues 38–190, 217–366, 395–493, and 565–596; these read DEYC…HKEI, QLQS…NLES, YAKS…SRQV, and KMLL…NNTV. Residues 622–649 are disordered; sequence VDLDDSNLEPNDSALDTSEQPAANFEES. Positions 629–642 are enriched in polar residues; that stretch reads LEPNDSALDTSEQP. 2 coiled-coil regions span residues 643-1158 and 1196-1247; these read AANF…IEAL and EEGR…DELN. An interacts with Mad1 region spans residues 1187 to 1655; sequence LNASGLTAAE…SPRTANVKPM (469 aa). A phosphothreonine mark is found at threonine 1259, threonine 1302, threonine 1338, and threonine 1390. Coiled-coil stretches lie at residues 1281–1536 and 1579–1627; these read TDSN…KRTE and SYDE…GSQQ. Polar residues-rich tracts occupy residues 1621–1649 and 1657–1667; these read RQLG…SPRT and GSATVQQSATV. 3 disordered regions span residues 1621–1677, 1695–1768, and 1821–2346; these read RQLG…ETPL, PTSQ…YMPS, and SPRV…GRFP. The segment covering 1702 to 1722 has biased composition (low complexity); it reads AGSSTSTSSSSSSSSTSTTSA. Over residues 1738–1747 the composition is skewed to polar residues; that stretch reads PQQQVHTTGS. Low complexity-rich tracts occupy residues 1752-1761 and 1827-1878; these read SMASSSPTSS and SSSS…PSSS. Residues 1879-1891 are compositionally biased toward polar residues; the sequence is NVTTTQAGCSSQG. Over residues 1953 to 2023 the composition is skewed to acidic residues; it reads QEDDIQVVDS…QDNNEVDIEV (71 aa). Residues 2028 to 2080 show a composition bias toward polar residues; that stretch reads MQAQEESQSLDNQAIATASASTQENNQSQAITSGSGESSNPVTLPQAEASNWK. Residues 2082–2091 are compositionally biased toward low complexity; the sequence is AAASTSTAAA. Composition is skewed to polar residues over residues 2097–2110 and 2142–2159; these read SVEI…SNFC and GAAS…GESS. Positions 2165 to 2184 are enriched in basic and acidic residues; that stretch reads KAADDGGDHADGTDNAREAD. Composition is skewed to polar residues over residues 2193 to 2223 and 2302 to 2322; these read ATGQ…NQAN and RDTS…NRFA. A compositionally biased stretch (basic residues) spans 2323-2332; that stretch reads QRTRNRRPIR.

This sequence belongs to the TPR family. As to quaternary structure, part of the nuclear pore complex (NPC). Associates with male-specific lethal (MSL) histone acetyltransferase complex. Interacts with Mad2; the interaction is required for efficient recruitment of Mad2 to unattached kinetochore and occurs in a microtubule-independent manner. Interacts with Mad1 (N-terminus). Interacts with Chro, east and Asator; the interaction is part of a macromolecular complex forming the spindle matrix during mitosis. Interacts with Nup98. In males, interacts with histone acetyltransferase mof. Mps1-mediated phosphorylation disrupts interaction with Mad1 during mitosis. In terms of tissue distribution, expressed in salivary glands, fat body, tracheal tube, esophageal tube and anterior ejaculatory duct (at protein level).

It is found in the nucleus. The protein localises to the nucleus matrix. It localises to the nucleus lamina. The protein resides in the nucleus envelope. Its subcellular location is the nucleus membrane. It is found in the nuclear pore complex. The protein localises to the cytoplasm. It localises to the cytoskeleton. The protein resides in the spindle. Its subcellular location is the chromosome. It is found in the centromere. The protein localises to the kinetochore. It localises to the midbody. In terms of biological role, component of the nuclear pore complex (NPC), a complex required for the trafficking across the nuclear envelope. Functions as a scaffolding element in the nuclear phase of the NPC. Plays a role in chromosomal organization and gene expression regulation; stimulates transcription by promoting the formation of an open chromatin environment. Binds chromatin to nucleoporin-associated regions (NARs) that define transcriptionally active regions of the genome. Associates with extended chromosomal regions that alternate between domains of high density binding with those of low occupancy. Preferentially binds to NARs of the male X chromosome. In males, together with Nup153, required for the localization of the male-specific lethal (MSL) histone acetyltransferase complex to the X chromosome and therefore for the transcription of dosage compensation genes. In males, restrains dosage-compensated expression at the level of nascent transcription probably by interacting with the MSL complex and by modulating RNA Polymerase II phosphorylation status and activity. During mitosis forms a gel-like spindle matrix complex together with Skeletor (Skel), Chro, east, and Asator embedding the microtubule spindle apparatus. During interphase localizes Mad1 to the nuclear pore complex and thereby might act as a scaffold to assemble the Mad1-C-Mad2 complex, a heterotetramer that catalyzes the structural conversion of open-Mad2 (O-Mad2) into closed-Mad2 (C-Mad2) which is essential for spindle-assembly checkpoint (SAC). During the metaphase-anaphase transition and before chromosome congression, is phosphorylated by Msp-1; this modification releases Mad1 from the nuclear pore complex and thereby promotes assembly of SAC ensuring a timely and effective recruitment of spindle checkpoint proteins like Mad1, Mad2 and Mps1 to unattached kinetochores (KT). In testes, has a role in stem cell asymmetric division and maintenance via regulation of mitotic spindle assembly checkpoint (SAC) complex. This Drosophila melanogaster (Fruit fly) protein is Nucleoprotein TPR.